The primary structure comprises 93 residues: Co-chaperonin GroES (93 aa).

It belongs to the GroES chaperonin family. As to quaternary structure, heptamer of 7 subunits arranged in a ring. Interacts with the chaperonin GroEL.

The protein resides in the cytoplasm. Its function is as follows. Together with the chaperonin GroEL, plays an essential role in assisting protein folding. The GroEL-GroES system forms a nano-cage that allows encapsulation of the non-native substrate proteins and provides a physical environment optimized to promote and accelerate protein folding. GroES binds to the apical surface of the GroEL ring, thereby capping the opening of the GroEL channel. The sequence is that of Co-chaperonin GroES from Streptococcus constellatus.